We begin with the raw amino-acid sequence, 356 residues long: Protein-glutamate methylesterase/protein-glutamine glutaminase (356 aa).

Positions 4–121 (KVLIVDDSAL…QSGMLEYTDL (118 aa)) constitute a Response regulatory domain. A 4-aspartylphosphate modification is found at Asp55. Residues 156-349 (PLTSSEKLII…RRVLEFFAAH (194 aa)) enclose the CheB-type methylesterase domain. Residues Ser169, His195, and Asp291 contribute to the active site.

It belongs to the CheB family. In terms of processing, phosphorylated by CheA. Phosphorylation of the N-terminal regulatory domain activates the methylesterase activity.

Its subcellular location is the cytoplasm. It catalyses the reaction [protein]-L-glutamate 5-O-methyl ester + H2O = L-glutamyl-[protein] + methanol + H(+). The catalysed reaction is L-glutaminyl-[protein] + H2O = L-glutamyl-[protein] + NH4(+). Functionally, involved in chemotaxis. Part of a chemotaxis signal transduction system that modulates chemotaxis in response to various stimuli. Catalyzes the demethylation of specific methylglutamate residues introduced into the chemoreceptors (methyl-accepting chemotaxis proteins or MCP) by CheR. Also mediates the irreversible deamidation of specific glutamine residues to glutamic acid. The polypeptide is Protein-glutamate methylesterase/protein-glutamine glutaminase (Thiobacillus denitrificans (strain ATCC 25259 / T1)).